The sequence spans 793 residues: Calcium permeable stress-gated cation channel 1 (793 aa).

The Lumenal portion of the chain corresponds to 1–21; the sequence is MAFNGYGIFDSDPRKNPSSDL. A helical membrane pass occupies residues 22–42; the sequence is RTQFWLAFLLGASACVFFCFF. At 43-95 the chain is on the cytoplasmic side; the sequence is RKRWKVLYAPRTTIEGLNLPTLSSSYYKWLMDLVNIPDDVVQNCAGLDGYVFL. A helical transmembrane segment spans residues 96 to 116; it reads LFFKMGIKFLSFASLLGVLII. The Lumenal segment spans residues 117–192; it reads MPVNKHFRGD…IPGLPQPGDG (76 aa). The chain crosses the membrane as a helical span at residues 193 to 213; the sequence is FLYLYVLFTYFISIFLLYVLF. Over 214–444 the chain is Cytoplasmic; that stretch reads SSTKSIADIR…HKFFQGWFIT (231 aa). Residues 445–465 traverse the membrane as a helical segment; sequence LVTFMIILLWTVPVGAIAVFI. Over 466–493 the chain is Lumenal; sequence NLDTIRRLWPELGRMIEDLPFLNSLLRT. The helical transmembrane segment at 494 to 514 threads the bilayer; sequence FLPTLVYSLFISISPFLFRWL. The Cytoplasmic portion of the chain corresponds to 515–534; it reads SSMQGLSSRAEEEIYAVGKN. A helical transmembrane segment spans residues 535-555; it reads YAYLFVNFFLVYVIAGSTSIW. Residues 556-577 lie on the Lumenal side of the membrane; the sequence is ELAKDTTSFAHFLANRLPHQAQ. Residues 578-598 traverse the membrane as a helical segment; the sequence is FFIDLIVLQGIGMFPLKLIQL. Over 599 to 646 the chain is Cytoplasmic; that stretch reads GKLSSYFVRRSFVPYSIASKKFETPDSFSVGIFLPQPMFIMLICLCYS. Residues 647 to 667 form a helical membrane-spanning segment; that stretch reads IISPLILVFGLIYFIIGFLVY. Topologically, residues 668-687 are lumenal; sequence KYELIYQMEHPQHSTGELWS. The chain crosses the membrane as a helical span at residues 688 to 708; the sequence is TIFLRMIFGCVIMQLTMMGLM. Residues 709–713 are Cytoplasmic-facing; that stretch reads SLRKA. Residues 714 to 734 traverse the membrane as a helical segment; the sequence is YWLSTVIFPLLCFTVISAYNF. The Lumenal portion of the chain corresponds to 735–793; it reads STMIRSSMQFVSLYYIRTHQSNTLSSESESRNSESSGSYVHPGFDLSNEELPLIDLNTA. The disordered stretch occupies residues 759–778; the sequence is SSESESRNSESSGSYVHPGF.

This sequence belongs to the CSC1 (TC 1.A.17) family.

Its subcellular location is the vacuole membrane. Functionally, acts as an osmosensitive calcium-permeable cation channel. This is Calcium permeable stress-gated cation channel 1 from Schizosaccharomyces pombe (strain 972 / ATCC 24843) (Fission yeast).